A 377-amino-acid polypeptide reads, in one-letter code: Nucleosome assembly protein 1;3 (377 aa).

Positions Val-26–Glu-80 form a coiled coil. A Nuclear export signal motif is present at residues Leu-47–Gln-62. Residues Lys-223 to Lys-228 carry the Nuclear localization signal motif. Residues Glu-298–Gln-377 form a disordered region. Over residues Ala-300–Glu-341 the composition is skewed to acidic residues. The segment covering Lys-345–Ser-357 has biased composition (basic residues). Cys-374 is subject to Cysteine methyl ester. Cys-374 is lipidated: S-farnesyl cysteine. Residues Lys-375 to Gln-377 constitute a propeptide, removed in mature form.

Belongs to the nucleosome assembly protein (NAP) family. Can form homomeric and heteromeric protein complexes with NAP1;4. Binds histones H2A and H2B in vivo. Also able to bind histones H1 and H4 in vitro. Interacts with CYCB1;1 and with alpha tubulin.

It localises to the nucleus. The protein localises to the cytoplasm. Its function is as follows. May modulate chromatin structure by regulation of nucleosome assembly/disassembly. Could function together with B-type cyclins in the regulation of microtubule dynamics. The chain is Nucleosome assembly protein 1;3 (NAP1;3) from Nicotiana tabacum (Common tobacco).